A 147-amino-acid chain; its full sequence is NADH-quinone oxidoreductase subunit A (147 aa).

A run of 3 helical transmembrane segments spans residues 16 to 36 (FAIF…GGWF), 68 to 88 (FYLV…LFAW), and 98 to 118 (VGFV…VYLV).

This sequence belongs to the complex I subunit 3 family. In terms of assembly, NDH-1 is composed of 13 different subunits. Subunits NuoA, H, J, K, L, M, N constitute the membrane sector of the complex.

The protein localises to the cell inner membrane. The enzyme catalyses a quinone + NADH + 5 H(+)(in) = a quinol + NAD(+) + 4 H(+)(out). NDH-1 shuttles electrons from NADH, via FMN and iron-sulfur (Fe-S) centers, to quinones in the respiratory chain. The immediate electron acceptor for the enzyme in this species is believed to be ubiquinone. Couples the redox reaction to proton translocation (for every two electrons transferred, four hydrogen ions are translocated across the cytoplasmic membrane), and thus conserves the redox energy in a proton gradient. In Citrobacter koseri (strain ATCC BAA-895 / CDC 4225-83 / SGSC4696), this protein is NADH-quinone oxidoreductase subunit A.